Consider the following 508-residue polypeptide: Cobyric acid synthase (508 aa).

The 199-residue stretch at 266 to 464 (SLRIAVVAYP…AHGLFESTEV (199 aa)) folds into the GATase cobBQ-type domain. Catalysis depends on Cys347, which acts as the Nucleophile. His456 is an active-site residue.

It belongs to the CobB/CobQ family. CobQ subfamily.

It functions in the pathway cofactor biosynthesis; adenosylcobalamin biosynthesis. Functionally, catalyzes amidations at positions B, D, E, and G on adenosylcobyrinic A,C-diamide. NH(2) groups are provided by glutamine, and one molecule of ATP is hydrogenolyzed for each amidation. The chain is Cobyric acid synthase from Methylibium petroleiphilum (strain ATCC BAA-1232 / LMG 22953 / PM1).